The chain runs to 166 residues: MLMIRQRTTARPEWDAELELSLEARSKSRLRCFTTAGEDVGLFLERGQPPLADGDFLLADDGRLVRVRARPERLLHVACANAFELTRAAYHLGNRHVALQIGDGWLRLLDDYVLEDMLRQLGARVETVEAPFQPEHGAYGGGHHHSHGGEAEFSYAPKLHQFGVRK.

Belongs to the UreE family.

The protein localises to the cytoplasm. In terms of biological role, involved in urease metallocenter assembly. Binds nickel. Probably functions as a nickel donor during metallocenter assembly. In Azotobacter vinelandii (strain DJ / ATCC BAA-1303), this protein is Urease accessory protein UreE.